The sequence spans 378 residues: Merozoite surface protein P41 (378 aa).

The signal sequence occupies residues Met-1–Ser-20. The 6-Cys 1 domain maps to Lys-21 to Asp-133. 3 disulfide bridges follow: Cys-25–Cys-42, Cys-56–Cys-113, and Cys-64–Cys-111. 4 N-linked (GlcNAc...) asparagine glycosylation sites follow: Asn-77, Asn-149, Asn-182, and Asn-205. Residues Val-241–Phe-375 enclose the 6-Cys 2 domain. 3 cysteine pairs are disulfide-bonded: Cys-245/Cys-270, Cys-284/Cys-348, and Cys-297/Cys-346. Asn-351 carries an N-linked (GlcNAc...) asparagine glycan.

In terms of assembly, heterodimer; heterodimerizes with PF12. May form an antiparallel heterodimer with PF12. In terms of processing, processed into a soluble form.

Its subcellular location is the cell surface. The protein localises to the cell membrane. The chain is Merozoite surface protein P41 (PF41) from Plasmodium falciparum (isolate 3D7).